Reading from the N-terminus, the 344-residue chain is tRNA N6-adenosine threonylcarbamoyltransferase (344 aa).

Residues His-119 and His-123 each contribute to the Fe cation site. Residues 141-145 (VVSGG), Asp-174, Gly-187, Asp-191, and Asn-280 contribute to the substrate site. Asp-310 provides a ligand contact to Fe cation.

The protein belongs to the KAE1 / TsaD family. Fe(2+) is required as a cofactor.

The protein resides in the cytoplasm. It carries out the reaction L-threonylcarbamoyladenylate + adenosine(37) in tRNA = N(6)-L-threonylcarbamoyladenosine(37) in tRNA + AMP + H(+). In terms of biological role, required for the formation of a threonylcarbamoyl group on adenosine at position 37 (t(6)A37) in tRNAs that read codons beginning with adenine. Is involved in the transfer of the threonylcarbamoyl moiety of threonylcarbamoyl-AMP (TC-AMP) to the N6 group of A37, together with TsaE and TsaB. TsaD likely plays a direct catalytic role in this reaction. This chain is tRNA N6-adenosine threonylcarbamoyltransferase, found in Listeria monocytogenes serotype 4b (strain CLIP80459).